The primary structure comprises 332 residues: Holliday junction branch migration complex subunit RuvB (332 aa).

Residues 1-181 are large ATPase domain (RuvB-L); sequence MARILDNDVM…FGITGHMEYY (181 aa). ATP contacts are provided by residues leucine 20, arginine 21, glycine 62, lysine 65, threonine 66, threonine 67, 128–130, arginine 171, tyrosine 181, and arginine 218; that span reads EDF. Threonine 66 serves as a coordination point for Mg(2+). The tract at residues 182–252 is small ATPAse domain (RuvB-S); sequence QEKDLTEIVE…ITDRALTMLD (71 aa). Residues 255 to 332 form a head domain (RuvB-H) region; sequence REGLDYIDQK…RHLGYPYQNT (78 aa). DNA-binding residues include arginine 291, arginine 310, arginine 312, and arginine 315.

Belongs to the RuvB family. Homohexamer. Forms an RuvA(8)-RuvB(12)-Holliday junction (HJ) complex. HJ DNA is sandwiched between 2 RuvA tetramers; dsDNA enters through RuvA and exits via RuvB. An RuvB hexamer assembles on each DNA strand where it exits the tetramer. Each RuvB hexamer is contacted by two RuvA subunits (via domain III) on 2 adjacent RuvB subunits; this complex drives branch migration. In the full resolvosome a probable DNA-RuvA(4)-RuvB(12)-RuvC(2) complex forms which resolves the HJ.

The protein localises to the cytoplasm. It carries out the reaction ATP + H2O = ADP + phosphate + H(+). The RuvA-RuvB-RuvC complex processes Holliday junction (HJ) DNA during genetic recombination and DNA repair, while the RuvA-RuvB complex plays an important role in the rescue of blocked DNA replication forks via replication fork reversal (RFR). RuvA specifically binds to HJ cruciform DNA, conferring on it an open structure. The RuvB hexamer acts as an ATP-dependent pump, pulling dsDNA into and through the RuvAB complex. RuvB forms 2 homohexamers on either side of HJ DNA bound by 1 or 2 RuvA tetramers; 4 subunits per hexamer contact DNA at a time. Coordinated motions by a converter formed by DNA-disengaged RuvB subunits stimulates ATP hydrolysis and nucleotide exchange. Immobilization of the converter enables RuvB to convert the ATP-contained energy into a lever motion, pulling 2 nucleotides of DNA out of the RuvA tetramer per ATP hydrolyzed, thus driving DNA branch migration. The RuvB motors rotate together with the DNA substrate, which together with the progressing nucleotide cycle form the mechanistic basis for DNA recombination by continuous HJ branch migration. Branch migration allows RuvC to scan DNA until it finds its consensus sequence, where it cleaves and resolves cruciform DNA. In Streptococcus pyogenes serotype M12 (strain MGAS9429), this protein is Holliday junction branch migration complex subunit RuvB.